A 106-amino-acid polypeptide reads, in one-letter code: ATPase inhibitor, mitochondrial (106 aa).

Residues 1 to 25 constitute a mitochondrion transit peptide; the sequence is MAGSALAVRARFGVWGMKVLQTRGF. Positions 26–52 are N-terminal inhibitory region; the sequence is VSDSSDSMDTGAGSIREAGGAFGKREK. The disordered stretch occupies residues 26–58; sequence VSDSSDSMDTGAGSIREAGGAFGKREKAEEDRY. Ser39 bears the Phosphoserine mark. The segment covering 48–58 has biased composition (basic and acidic residues); sequence GKREKAEEDRY. Residues 60 to 106 are a coiled coil; sequence REKTKEQLAALRKHHEDEIDHHSKEIERLQKQIERHKKKIQQLKNNH. An antiparallel alpha-helical coiled coil region region spans residues 74–106; the sequence is HEDEIDHHSKEIERLQKQIERHKKKIQQLKNNH. Lys103 bears the N6-succinyllysine mark.

This sequence belongs to the ATPase inhibitor family. In terms of assembly, homodimer; represents the active form and is present at a pH value below 6.5. Homotetramer; represents the inactive form and is present at a pH value above 7.0.

Its subcellular location is the mitochondrion. Its function is as follows. Endogenous F(1)F(o)-ATPase inhibitor limiting ATP depletion when the mitochondrial membrane potential falls below a threshold and the F(1)F(o)-ATP synthase starts hydrolyzing ATP to pump protons out of the mitochondrial matrix. Required to avoid the consumption of cellular ATP when the F(1)F(o)-ATP synthase enzyme acts as an ATP hydrolase. Indirectly acts as a regulator of heme synthesis in erythroid tissues: regulates heme synthesis by modulating the mitochondrial pH and redox potential, allowing FECH to efficiently catalyze the incorporation of iron into protoporphyrin IX to produce heme. The chain is ATPase inhibitor, mitochondrial from Mus musculus (Mouse).